Consider the following 148-residue polypeptide: Gastrin-releasing peptide (148 aa).

Positions 1-23 (MRGRELPLVLLALVLCLAPRGRA) are cleaved as a signal peptide. Methionine 50 is modified (methionine amide). Residues 54–148 (STGESSSVSE…EGRNPQLNQQ (95 aa)) constitute a propeptide that is removed on maturation. The interval 89–148 (EAKENRNHQPPQPKALGNQQPSWDSEDSSNFKDVGSKGKVGRLSAPGSQREGRNPQLNQQ) is disordered.

This sequence belongs to the bombesin/neuromedin-B/ranatensin family.

The protein resides in the secreted. Its subcellular location is the cytoplasmic vesicle. It localises to the secretory vesicle lumen. The protein localises to the cell projection. It is found in the neuron projection. Its function is as follows. Stimulates the release of gastrin and other gastrointestinal hormones. Contributes to the perception of prurient stimuli and to the transmission of itch signals in the spinal cord that promote scratching behavior. Contributes primarily to nonhistaminergic itch sensation. In one study, shown to act in the amygdala as part of an inhibitory network which inhibits memory specifically related to learned fear. In another study, shown to act on vasoactive intestinal peptide (VIP)-expressing cells in the auditory cortex, most likely via extrasynaptic diffusion from local and long-range sources, to mediate disinhibition of glutamatergic cells via VIP cell-specific GRPR signaling which leads to enhanced auditory fear memories. Contributes to the regulation of food intake. Inhibits voltage-gated sodium channels but enhances voltage-gated potassium channels in hippocampal neurons. Induces sighing by acting directly on the pre-Botzinger complex, a cluster of several thousand neurons in the ventrolateral medulla responsible for inspiration during respiratory activity. Functionally, induces an itch response through activation of receptors present on mast cells, triggering mast cell degranulation. In Homo sapiens (Human), this protein is Gastrin-releasing peptide (GRP).